The sequence spans 786 residues: Signal transducer and activator of transcription 5B (786 aa).

Position 90 is a phosphotyrosine (Tyr-90). Ser-128 is modified (phosphoserine). The SH2 domain maps to 589 to 686 (WNDGAILGFV…EVYSKYYTPV (98 aa)). A phosphotyrosine mark is found at Tyr-682 and Tyr-699.

It belongs to the transcription factor STAT family. As to quaternary structure, upon activation, forms a homodimer or a heterodimer with a related family member. Binds NR3C1. Interacts with NCOA1. Interacts with NMI. Interacts with SOCS7. Interacts (via SH2 domain) with INSR. Interacts with CPEB3; this inhibits STAT5B-mediated transcriptional activation. Tyrosine phosphorylated in response to signaling via activated KIT, resulting in translocation to the nucleus. Tyrosine phosphorylated in response to signaling via activated FLT3; wild-type FLT3 results in much weaker phosphorylation than constitutively activated mutant FLT3. Alternatively, can be phosphorylated by JAK2. Phosphorylation at Tyr-699 by PTK6 or HCK leads to an increase of its transcriptional activity.

The protein localises to the cytoplasm. Its subcellular location is the nucleus. Functionally, carries out a dual function: signal transduction and activation of transcription. Mediates cellular responses to the cytokine KITLG/SCF and other growth factors. Binds to the GAS element and activates PRL-induced transcription. Positively regulates hematopoietic/erythroid differentiation. The polypeptide is Signal transducer and activator of transcription 5B (Stat5b) (Rattus norvegicus (Rat)).